Reading from the N-terminus, the 209-residue chain is Bilin biosynthesis protein RpcF (209 aa).

This sequence belongs to the CpcE/RpcE/PecE family.

Functionally, an enzyme involved in the biosynthesis of bilin. Might be involved in the specific attachment of phycoerythrobilin (PEB) to the R-phycocyanin II alpha chain. This chain is Bilin biosynthesis protein RpcF (rpcF), found in Synechococcus sp. (strain WH8020).